A 149-amino-acid polypeptide reads, in one-letter code: MRCPFCDTEETKVIDSRLVSDGYQVRRRRECGHCHERFTTFEMAELIIPKIIKTDGTREPFNEDKLRSGIQHALEKRPVSADDVEKAINHIILQLRATGEREVPSKLVGKLAMNELKKLDKVAYIRFASVYLSFDDIDQFTIEIEKLKD.

Residues 3–34 fold into a zinc finger; that stretch reads CPFCDTEETKVIDSRLVSDGYQVRRRRECGHC. The ATP-cone domain maps to 49–139; that stretch reads PKIIKTDGTR…VYLSFDDIDQ (91 aa).

It belongs to the NrdR family. Zn(2+) serves as cofactor.

In terms of biological role, negatively regulates transcription of bacterial ribonucleotide reductase nrd genes and operons by binding to NrdR-boxes. This chain is Transcriptional repressor NrdR, found in Haemophilus influenzae (strain PittEE).